The primary structure comprises 230 residues: Heptaprenylglyceryl phosphate synthase (230 aa).

Sn-glycerol 1-phosphate is bound at residue lysine 12. Mg(2+)-binding residues include aspartate 14 and threonine 40. Sn-glycerol 1-phosphate is bound by residues 159 to 164 (YIEYSG), glycine 189, and 209 to 210 (GD).

Belongs to the GGGP/HepGP synthase family. Group I subfamily. Homodimer. The cofactor is Mg(2+).

It catalyses the reaction sn-glycerol 1-phosphate + all-trans-heptaprenyl diphosphate = 3-heptaprenyl-sn-glycero-1-phosphate + diphosphate. Its pathway is membrane lipid metabolism; glycerophospholipid metabolism. Prenyltransferase that catalyzes in vivo the transfer of the heptaprenyl moiety of heptaprenyl pyrophosphate (HepPP; 35 carbon atoms) to the C3 hydroxyl of sn-glycerol-1-phosphate (G1P), producing heptaprenylglyceryl phosphate (HepGP). This reaction is an ether-bond-formation step in the biosynthesis of archaea-type G1P-based membrane lipids found in Bacillales. This chain is Heptaprenylglyceryl phosphate synthase, found in Staphylococcus aureus (strain Mu3 / ATCC 700698).